Consider the following 481-residue polypeptide: Ribulose bisphosphate carboxylase large chain (481 aa).

Positions M1–S2 are excised as a propeptide. P3 is subject to N-acetylproline. An N6,N6,N6-trimethyllysine modification is found at K14. N123 and T173 together coordinate substrate. Residue K175 is the Proton acceptor of the active site. K177 contacts substrate. K201, D203, and E204 together coordinate Mg(2+). K201 is subject to N6-carboxylysine. H294 acts as the Proton acceptor in catalysis. Substrate is bound by residues R295, H327, and S379.

It belongs to the RuBisCO large chain family. Type I subfamily. In terms of assembly, heterohexadecamer of 8 large chains and 8 small chains; disulfide-linked. The disulfide link is formed within the large subunit homodimers. Mg(2+) serves as cofactor. Post-translationally, the disulfide bond which can form in the large chain dimeric partners within the hexadecamer appears to be associated with oxidative stress and protein turnover.

The protein resides in the plastid. It catalyses the reaction 2 (2R)-3-phosphoglycerate + 2 H(+) = D-ribulose 1,5-bisphosphate + CO2 + H2O. The catalysed reaction is D-ribulose 1,5-bisphosphate + O2 = 2-phosphoglycolate + (2R)-3-phosphoglycerate + 2 H(+). RuBisCO catalyzes two reactions: the carboxylation of D-ribulose 1,5-bisphosphate, the primary event in carbon dioxide fixation, as well as the oxidative fragmentation of the pentose substrate in the photorespiration process. Both reactions occur simultaneously and in competition at the same active site. This is Ribulose bisphosphate carboxylase large chain from Cuscuta obtusiflora (Peruvian dodder).